A 558-amino-acid polypeptide reads, in one-letter code: Formate--tetrahydrofolate ligase (558 aa).

67–74 (TPAGEGKT) contributes to the ATP binding site.

Belongs to the formate--tetrahydrofolate ligase family.

The enzyme catalyses (6S)-5,6,7,8-tetrahydrofolate + formate + ATP = (6R)-10-formyltetrahydrofolate + ADP + phosphate. It functions in the pathway one-carbon metabolism; tetrahydrofolate interconversion. The protein is Formate--tetrahydrofolate ligase of Roseobacter denitrificans (strain ATCC 33942 / OCh 114) (Erythrobacter sp. (strain OCh 114)).